The chain runs to 217 residues: Ribonuclease HII (217 aa).

Residues 16–217 (YCIAGVDEVG…VARVLGTYHD (202 aa)) enclose the RNase H type-2 domain. Positions 22, 23, and 114 each coordinate a divalent metal cation.

The protein belongs to the RNase HII family. Mn(2+) is required as a cofactor. It depends on Mg(2+) as a cofactor.

The protein localises to the cytoplasm. It catalyses the reaction Endonucleolytic cleavage to 5'-phosphomonoester.. Functionally, endonuclease that specifically degrades the RNA of RNA-DNA hybrids. The sequence is that of Ribonuclease HII from Colwellia psychrerythraea (strain 34H / ATCC BAA-681) (Vibrio psychroerythus).